We begin with the raw amino-acid sequence, 246 residues long: LexA repressor (246 aa).

The tract at residues 1-34 (MATPQTGKKTPSRRVSELPDGPPDATGLTPRQQR) is disordered. Residues 52-72 (MREIGEAVGLTSSSSVAHQLK) constitute a DNA-binding region (H-T-H motif). Active-site for autocatalytic cleavage activity residues include serine 170 and lysine 207.

Belongs to the peptidase S24 family. As to quaternary structure, homodimer.

It carries out the reaction Hydrolysis of Ala-|-Gly bond in repressor LexA.. Its function is as follows. Represses a number of genes involved in the response to DNA damage (SOS response), including recA and lexA. In the presence of single-stranded DNA, RecA interacts with LexA causing an autocatalytic cleavage which disrupts the DNA-binding part of LexA, leading to derepression of the SOS regulon and eventually DNA repair. This is LexA repressor from Nocardioides sp. (strain ATCC BAA-499 / JS614).